The chain runs to 363 residues: Protein RecA (363 aa).

77 to 84 (GPESSGKT) contributes to the ATP binding site.

This sequence belongs to the RecA family.

It localises to the cytoplasm. Its function is as follows. Can catalyze the hydrolysis of ATP in the presence of single-stranded DNA, the ATP-dependent uptake of single-stranded DNA by duplex DNA, and the ATP-dependent hybridization of homologous single-stranded DNAs. It interacts with LexA causing its activation and leading to its autocatalytic cleavage. The polypeptide is Protein RecA (Agrobacterium fabrum (strain C58 / ATCC 33970) (Agrobacterium tumefaciens (strain C58))).